The chain runs to 400 residues: Endoplasmin (400 aa).

An N6-succinyllysine modification is found at K1. N-linked (GlcNAc...) asparagine glycosylation occurs at N42. Residue S44 is modified to Phosphoserine. An N6-acetyllysine modification is found at K76. Residues N78 and N99 are each glycosylated (N-linked (GlcNAc...) asparagine). Position 230 is an N6-succinyllysine (K230). The interval 346 to 400 (IDPEAQVEEEPEEEPEDTTEDTEQDEEEEVDAGTEEEEEEEQETAKESTAEKDEL) is disordered. Residues 350–387 (AQVEEEPEEEPEDTTEDTEQDEEEEVDAGTEEEEEEEQ) show a composition bias toward acidic residues. Position 379 is a phosphothreonine (T379). Residues 388–400 (ETAKESTAEKDEL) are compositionally biased toward basic and acidic residues. Positions 397–400 (KDEL) match the Prevents secretion from ER motif.

This sequence belongs to the heat shock protein 90 family. Homodimer; disulfide-linked. Component of an EIF2 complex at least composed of CELF1/CUGBP1, CALR, CALR3, EIF2S1, EIF2S2, HSP90B1 and HSPA5. Part of a large chaperone multiprotein complex comprising DNAJB11, HSP90B1, HSPA5, HYOU, PDIA2, PDIA4, PDIA6, PPIB, SDF2L1, UGGT1 and very small amounts of ERP29, but not, or at very low levels, CALR nor CANX. Interacts with AIMP1; regulates its retention in the endoplasmic reticulum. Hyperglycosylated form interacts with OS9; promoting its degradation by the endoplasmic reticulum associated degradation (ERAD). Interacts with CNPY3. This interaction is disrupted in the presence of ATP. Interacts with TLR4 and TLR9, but not with TLR3. Interacts with MZB1 in a calcium-dependent manner. Interacts with METTL23. Interacts with IL1B; the interaction facilitates cargo translocation into the ERGIC. Interacts with EIF2AK3. Phosphorylated by CK2. Post-translationally, N-glycosylated cotranslationally at Asn-217 by STT3A-containing OST-A complex: this glycosylation is constitutive. In response to various stress, 5 additional facultative sites (Asn-62, Asn-107, Asn-445, Asn-481 and Asn-502) can be glycosylated post-translationally by STT3B-containing OST-B complex, leading to a hyperglycosylated form that is degraded by the ER-associated degradation (ERAD) pathway. In normal conditions, the OST-A complex together with CCDC134 prevent glycosylation at facultative sites during protein folding, thereby preventing hyperglycosylation. Mechanistically, nascent HSP90B1 is tethered during translation to a specialized CCDC134-containing translocon that forms a microenvironment for its folding, in which STT3A associates with the SRT pseudosubstrate motif, and prevents access to facultative glycosylation sites until folding is completed, rendering its facultative sites inaccessible to the OST-B complex.

The protein resides in the endoplasmic reticulum lumen. It localises to the sarcoplasmic reticulum lumen. Its subcellular location is the melanosome. The enzyme catalyses ATP + H2O = ADP + phosphate + H(+). Functionally, ATP-dependent chaperone involved in the processing of proteins in the endoplasmic reticulum, regulating their transport. Together with MESD, acts as a modulator of the Wnt pathway by promoting the folding of LRP6, a coreceptor of the canonical Wnt pathway. When associated with CNPY3, required for proper folding of Toll-like receptors. Promotes folding and trafficking of TLR4 to the cell surface. May participate in the unfolding of cytosolic leaderless cargos (lacking the secretion signal sequence) such as the interleukin 1/IL-1 to facilitate their translocation into the ERGIC (endoplasmic reticulum-Golgi intermediate compartment) and secretion; the translocation process is mediated by the cargo receptor TMED10. The chain is Endoplasmin (HSP90B1) from Mesocricetus auratus (Golden hamster).